The sequence spans 245 residues: Terpene cyclase esdpB (245 aa).

The next 7 membrane-spanning stretches (helical) occupy residues 19 to 39, 48 to 68, 75 to 95, 112 to 132, 140 to 160, 177 to 197, and 208 to 228; these read MVASIFLISGTGWIVNYVTTI, SGVTLLSLCNNLAWETVFAVI, IAALVITVWLLVNIYVIYVSV, LPVVTLLGFVGFLTGHIALSM, LYWGGMICQVTLSASALGLLI, FIASSFGVPGLFVRAVYWPSA, and WLSGVFFLLDLSYGAIYYHIS.

It belongs to the paxB family.

The protein resides in the membrane. It functions in the pathway secondary metabolite biosynthesis; terpenoid biosynthesis. Its function is as follows. Terpene cyclase; part of the cluster that mediates the biosynthesis of shearones, diterpenoid pyrones (DPs) which are structurally diverse meroterpenoids consisting of a diterpene linked by a pyrone, and which may exhibit a range of bioactivities. Within the pathway, esdpB takes part to the biosynthesis of the molecular scaffold by catalyzing the cyclization of the prenyl group initiated by protonation and ring-opening of the epoxide to produce the diterpenoid pyrone scaffold. The molecular scaffold is commonly biosynthesized by a series of enzymes including the non-reducing polyketide synthase (NR-PKS) esdpA that generates an alpha-pyrone; the prenyltransferase esdpC that attaches a geranylgeranyl pyrophosphate (GGPP) produced by the GGPP synthase (GGPPS) esdpD onto the pyrone unit; the FAD-dependent monooxygenase esdpE that converts an olefin on the diterpene unit into an epoxide; and the terpene cyclase esdpB that catalyzes the cyclization reactions to give the molecular backbone shearone A. In the modification steps, esdpF oxidizes the hydroxy group to a ketone at C-3 and esdpG then attaches hydroxy groups at both C-11 and C-12. After that, esdpI hydroxylates at C-20 and esdpH hydroxylates at C-6'. The ether bridge is generated by nucleophilic attack of the hydroxy group at C-20 to the carbonyl carbon at C-3. EsdpH can also functions prior to esdpI. The different combinations of these modification enzymes lead to the production of diverse shearone derivatives, shearone I being the end product of the pathway. The alpha-ketoglutarate-dependent dioxygenase esdpJ seems not to be involved in this pathway. This is Terpene cyclase esdpB from Penicillium shearii (Eupenicillium shearii).